The sequence spans 270 residues: Mediator of RNA polymerase II transcription subunit 4 (270 aa).

The disordered stretch occupies residues 1-22 (MAASSSGEKEKERMGGVSGMTG). Residue A2 is modified to N-acetylalanine. Residues 26 to 131 (TRERLLSALE…ATAVYQAKEK (106 aa)) are a coiled coil. Position 32 is a phosphoserine (S32). The tract at residues 227–270 (MSVNMLPPNHSTDFLLEPPGHNKENEDDVEVMSTDSSSSSSDSD) is disordered. Residues 259–270 (STDSSSSSSDSD) are compositionally biased toward low complexity.

The protein belongs to the Mediator complex subunit 4 family. In terms of assembly, component of the Mediator complex, which is composed of MED1, MED4, MED6, MED7, MED8, MED9, MED10, MED11, MED12, MED13, MED13L, MED14, MED15, MED16, MED17, MED18, MED19, MED20, MED21, MED22, MED23, MED24, MED25, MED26, MED27, MED29, MED30, MED31, CCNC, CDK8 and CDC2L6/CDK11. The MED12, MED13, CCNC and CDK8 subunits form a distinct module termed the CDK8 module. Mediator containing the CDK8 module is less active than Mediator lacking this module in supporting transcriptional activation. Individual preparations of the Mediator complex lacking one or more distinct subunits have been variously termed ARC, CRSP, DRIP, PC2, SMCC and TRAP.

The protein resides in the nucleus. Component of the Mediator complex, a coactivator involved in the regulated transcription of nearly all RNA polymerase II-dependent genes. Mediator functions as a bridge to convey information from gene-specific regulatory proteins to the basal RNA polymerase II transcription machinery. Mediator is recruited to promoters by direct interactions with regulatory proteins and serves as a scaffold for the assembly of a functional preinitiation complex with RNA polymerase II and the general transcription factors. In Rattus norvegicus (Rat), this protein is Mediator of RNA polymerase II transcription subunit 4 (Med4).